The primary structure comprises 162 residues: uncharacterized protein (162 aa).

The protein belongs to the A.longa ORF167/ORF288 family.

The protein resides in the plastid. This is an uncharacterized protein from Euglena longa (Euglenophycean alga).